Consider the following 182-residue polypeptide: UPF0398 protein lwe1908 (182 aa).

It belongs to the UPF0398 family.

This Listeria welshimeri serovar 6b (strain ATCC 35897 / DSM 20650 / CCUG 15529 / CIP 8149 / NCTC 11857 / SLCC 5334 / V8) protein is UPF0398 protein lwe1908.